A 102-amino-acid polypeptide reads, in one-letter code: Aspartyl/glutamyl-tRNA(Asn/Gln) amidotransferase subunit C (102 aa).

Belongs to the GatC family. As to quaternary structure, heterotrimer of A, B and C subunits.

The catalysed reaction is L-glutamyl-tRNA(Gln) + L-glutamine + ATP + H2O = L-glutaminyl-tRNA(Gln) + L-glutamate + ADP + phosphate + H(+). The enzyme catalyses L-aspartyl-tRNA(Asn) + L-glutamine + ATP + H2O = L-asparaginyl-tRNA(Asn) + L-glutamate + ADP + phosphate + 2 H(+). Allows the formation of correctly charged Asn-tRNA(Asn) or Gln-tRNA(Gln) through the transamidation of misacylated Asp-tRNA(Asn) or Glu-tRNA(Gln) in organisms which lack either or both of asparaginyl-tRNA or glutaminyl-tRNA synthetases. The reaction takes place in the presence of glutamine and ATP through an activated phospho-Asp-tRNA(Asn) or phospho-Glu-tRNA(Gln). The sequence is that of Aspartyl/glutamyl-tRNA(Asn/Gln) amidotransferase subunit C from Bordetella bronchiseptica (strain ATCC BAA-588 / NCTC 13252 / RB50) (Alcaligenes bronchisepticus).